The sequence spans 197 residues: Isopentenyl-diphosphate Delta-isomerase (197 aa).

Residues His41 and His48 each contribute to the Mn(2+) site. The 138-residue stretch at 46–183 (QLHRAFSVFL…AWFMTVLDAA (138 aa)) folds into the Nudix hydrolase domain. Residue Cys83 is part of the active site. His85 contacts Mn(2+). Glu103 provides a ligand contact to Mg(2+). Mn(2+) contacts are provided by Glu130 and Glu132. Glu132 is a catalytic residue.

Belongs to the IPP isomerase type 1 family. Mg(2+) serves as cofactor. The cofactor is Mn(2+).

It is found in the cytoplasm. It catalyses the reaction isopentenyl diphosphate = dimethylallyl diphosphate. The protein operates within isoprenoid biosynthesis; dimethylallyl diphosphate biosynthesis; dimethylallyl diphosphate from isopentenyl diphosphate: step 1/1. In terms of biological role, catalyzes the 1,3-allylic rearrangement of the homoallylic substrate isopentenyl (IPP) to its highly electrophilic allylic isomer, dimethylallyl diphosphate (DMAPP). The chain is Isopentenyl-diphosphate Delta-isomerase from Streptomyces griseus subsp. griseus (strain JCM 4626 / CBS 651.72 / NBRC 13350 / KCC S-0626 / ISP 5235).